Reading from the N-terminus, the 60-residue chain is UPF0391 membrane protein CCNA_00709 (60 aa).

The next 2 membrane-spanning stretches (helical) occupy residues 4–24 (WAII…SGLA) and 33–53 (ILFF…GTVF).

The protein belongs to the UPF0391 family.

Its subcellular location is the cell membrane. The sequence is that of UPF0391 membrane protein CCNA_00709 from Caulobacter vibrioides (strain NA1000 / CB15N) (Caulobacter crescentus).